We begin with the raw amino-acid sequence, 50 residues long: Light-harvesting protein B-870 beta chain (50 aa).

Topologically, residues 2–22 are cytoplasmic; sequence ADNTDLSFTGLTDEQAQELHS. The a bacteriochlorophyll site is built by histidine 21 and histidine 39. A helical transmembrane segment spans residues 23 to 45; it reads VYMSGLFLFAAVAVVAHLATYIW. At 46 to 50 the chain is on the periplasmic side; sequence RPWFG.

Belongs to the antenna complex beta subunit family. In terms of assembly, the core complex is formed by different alpha and beta chains, binding bacteriochlorophyll molecules, and arranged most probably in tetrameric structures disposed around the reaction center. The non-pigmented gamma chains may constitute additional components.

Its subcellular location is the cell inner membrane. Functionally, antenna complexes are light-harvesting systems, which transfer the excitation energy to the reaction centers. The protein is Light-harvesting protein B-870 beta chain (pufB) of Roseobacter denitrificans (strain ATCC 33942 / OCh 114) (Erythrobacter sp. (strain OCh 114)).